The primary structure comprises 862 residues: Switch 2 (862 aa).

Disordered stretches follow at residues 13 to 43 and 58 to 95; these read PCGS…SSLS and KHES…DDER. The span at 16–27 shows a compositional bias: low complexity; the sequence is SFPSSSSLRVSS. Residues 58-84 show a composition bias toward basic and acidic residues; sequence KHESKISKTQVEDFDHNEDDHKRNIKF. Over residues 85–95 the composition is skewed to acidic residues; the sequence is DEEEVDEDDER. The 173-residue stretch at 151-323 folds into the Helicase ATP-binding domain; that stretch reads YNLYKNNHGG…FNLFEWVAPG (173 aa). 164-171 provides a ligand contact to ATP; the sequence is DDMGLGKT. The DEAH box signature appears at 274–277; sequence DEAH. A coiled-coil region spans residues 274-294; it reads DEAHRLKNEKSKLYEACLEIK. Residues 532–685 form the Helicase C-terminal domain; sequence ALEKLMASWI…VAGKMETRYF (154 aa). Residues 782–793 are compositionally biased toward polar residues; that stretch reads TTSTSQRLNGDG. Residues 782–821 form a disordered region; that stretch reads TTSTSQRLNGDGNSADRKKKKRKGCSEEEDMSSSNREQKR.

This sequence belongs to the SNF2/RAD54 helicase family.

Its function is as follows. May be involved in early DNA damage response. Probable chromatin remodeling factor. This chain is Switch 2, found in Arabidopsis thaliana (Mouse-ear cress).